The following is a 132-amino-acid chain: Replication enhancer protein (132 aa).

This sequence belongs to the geminiviridae replication enhancer protein family. As to quaternary structure, homooligomer. Interacts with the replication-associated protein (REP). Interacts with host proliferating cell nuclear antigen (PCNA). Interacts with host retinoblastoma-related protein 1 (RBR1), and may thereby deregulate the host cell cycle. Oligomerization and interaction with PCNA are necessary for optimal replication enhancement.

Its function is as follows. Increases viral DNA accumulation. Enhances infectivity and symptom expression. This chain is Replication enhancer protein, found in Potato yellow mosaic virus (isolate Venezuela) (PYMV).